A 171-amino-acid chain; its full sequence is Peptide deformylase (171 aa).

Residues Cys91 and His133 each coordinate Fe cation. Residue Glu134 is part of the active site. His137 serves as a coordination point for Fe cation.

The protein belongs to the polypeptide deformylase family. Requires Fe(2+) as cofactor.

The catalysed reaction is N-terminal N-formyl-L-methionyl-[peptide] + H2O = N-terminal L-methionyl-[peptide] + formate. Functionally, removes the formyl group from the N-terminal Met of newly synthesized proteins. Requires at least a dipeptide for an efficient rate of reaction. N-terminal L-methionine is a prerequisite for activity but the enzyme has broad specificity at other positions. This chain is Peptide deformylase, found in Haemophilus ducreyi (strain 35000HP / ATCC 700724).